Consider the following 336-residue polypeptide: Probable assembly chaperone of rpl4 (336 aa).

TPR repeat units follow at residues 39–72, 75–108, 110–143, and 162–195; these read GRAFELLGEVYAELADVKKARSAFKEAVSRSKNL, DQGYEKYLWLAQINDNGSKALKLYQKGVTILERL, IDKGEDADLKKKIQGAYCSIAELFMTDLCMQPDA, and AEALQTLASMRISQQKIEEAKDALSKCLQSISRA. Residues 316-336 are disordered; the sequence is DEENEEAEWETSENEEEMDED.

It belongs to the ACL4 family.

The protein resides in the cytoplasm. The protein localises to the nucleus. It is found in the nucleolus. Acts as a chaperone for the L4 ribosomal subunit encoded by rpl4A and rpl4B, required for hierarchical ribosome assembly. Shields ribosomal protein L4 until timely release and insertion into the pre-ribosome is possible, once ribosomal protein L18 is present. This Schizosaccharomyces pombe (strain 972 / ATCC 24843) (Fission yeast) protein is Probable assembly chaperone of rpl4.